A 447-amino-acid chain; its full sequence is Rab GDP dissociation inhibitor alpha (447 aa).

The protein belongs to the Rab GDI family. As to quaternary structure, interacts with RHOH. Interacts with the non-phosphorylated forms of RAB1A, RAB3A, RAB5A, RAB5B, RAB5C, RAB8A, RAB8B, RAB10, RAB12, RAB35, and RAB43.

The protein localises to the cytoplasm. It localises to the golgi apparatus. The protein resides in the trans-Golgi network. Its function is as follows. Regulates the GDP/GTP exchange reaction of most Rab proteins by inhibiting the dissociation of GDP from them, and the subsequent binding of GTP to them. Promotes the dissociation of GDP-bound Rab proteins from the membrane and inhibits their activation. Promotes the dissociation of RAB1A, RAB3A, RAB5A and RAB10 from membranes. The polypeptide is Rab GDP dissociation inhibitor alpha (GDI1) (Macaca fascicularis (Crab-eating macaque)).